Here is a 106-residue protein sequence, read N- to C-terminus: Thiosulfate sulfurtransferase GlpE (106 aa).

One can recognise a Rhodanese domain in the interval 17–105 (EQNEARLVDI…SYRAELPVIA (89 aa)). The Cysteine persulfide intermediate role is filled by Cys-65.

This sequence belongs to the GlpE family.

It localises to the cytoplasm. The enzyme catalyses thiosulfate + hydrogen cyanide = thiocyanate + sulfite + 2 H(+). The catalysed reaction is thiosulfate + [thioredoxin]-dithiol = [thioredoxin]-disulfide + hydrogen sulfide + sulfite + 2 H(+). Transferase that catalyzes the transfer of sulfur from thiosulfate to thiophilic acceptors such as cyanide or dithiols. May function in a CysM-independent thiosulfate assimilation pathway by catalyzing the conversion of thiosulfate to sulfite, which can then be used for L-cysteine biosynthesis. This is Thiosulfate sulfurtransferase GlpE from Vibrio atlanticus (strain LGP32) (Vibrio splendidus (strain Mel32)).